A 555-amino-acid chain; its full sequence is Formate--tetrahydrofolate ligase (555 aa).

An ATP-binding site is contributed by 65-72 (TPAGEGKS).

This sequence belongs to the formate--tetrahydrofolate ligase family.

It carries out the reaction (6S)-5,6,7,8-tetrahydrofolate + formate + ATP = (6R)-10-formyltetrahydrofolate + ADP + phosphate. The protein operates within one-carbon metabolism; tetrahydrofolate interconversion. This chain is Formate--tetrahydrofolate ligase, found in Staphylococcus haemolyticus (strain JCSC1435).